A 370-amino-acid chain; its full sequence is Protein DVU_0535 (370 aa).

Over 1-258 (MDRRRFLTLL…EELGTKSAPE (258 aa)) the chain is Cytoplasmic. 4Fe-4S ferredoxin-type domains follow at residues 40–70 (YGVLHDTTRCIGCRKCEQACNEVNKLPAPKA), 101–132 (DHPVFRKQQCNHCLEPACASACFVKAFTKNPD), and 133–162 (GSVTYDGSLCVGCRYCMVACPFNVPAFQYA). [4Fe-4S] cluster-binding residues include Cys49, Cys52, Cys55, Cys59, Cys110, Cys113, Cys118, Cys122, Cys142, Cys145, Cys148, Cys152, Cys172, Cys175, Cys187, and Cys191. Residues 259–284 (YTAGALGAVPMVVGIWPILLTGAYAI) traverse the membrane as a helical segment. Residues 285–370 (TKRKEKIAAE…DDAGKPGEDA (86 aa)) are Periplasmic-facing. Residues 345 to 355 (FEEELAAKEQP) show a composition bias toward basic and acidic residues. A disordered region spans residues 345 to 370 (FEEELAAKEQPEAPEGDDAGKPGEDA).

Its subcellular location is the cell membrane. HMWC (high-molecular-weight cytochrome c precursor), ORF2, ORF3, ORF4, ORF5, ORF6 in the HMC operon form a transmembrane protein complex that allows electron flow from the periplasmic hydrogenase to the cytoplasmic enzymes that catalyze reduction of sulfates. ORF2 is a transmembrane redox protein. The chain is Protein DVU_0535 from Nitratidesulfovibrio vulgaris (strain ATCC 29579 / DSM 644 / CCUG 34227 / NCIMB 8303 / VKM B-1760 / Hildenborough) (Desulfovibrio vulgaris).